Reading from the N-terminus, the 148-residue chain is Sporulation inhibitor of replication protein SirA (148 aa).

The protein belongs to the SirA family. As to quaternary structure, interacts with DnaA. Forms a 1:1 complex with domain I of DnaA.

The protein localises to the cytoplasm. In terms of biological role, inhibits DNA replication initiation during sporulation, preventing overinitiation and thus enforcing diploidy; probably the main regulator of sporulation replication initiation under Spo0A control. During sporulation SirA prevents DnaA association with the replication origin to prevent excessive chromosome replication. Alternatively SirA binds to domain I of DnaA and prevent its interaction with DnaD, preventing DNA replication initiation. Upon ectopic expression during vegetative growth reduces chromosome copy number, leading to elongated cells with that can have a single nucleoid or be anucleate. Ectopic expression during vegetative growth blocks DnaA at oriC while blocking recruitment of DnaD to oriC. Plays a significant role during the onset of sporulation. The sequence is that of Sporulation inhibitor of replication protein SirA from Bacillus subtilis (strain 168).